The primary structure comprises 1034 residues: DNA polymerase I B, chloroplastic/mitochondrial (1034 aa).

A chloroplast and mitochondrion-targeting transit peptide spans 1 to 55; the sequence is MGVSLRHLSPSSFWVSRRPRVSSSILSFLVPRRRILCTRKVAIIKGNAGYSTATD. The region spanning 270-468 is the 3'-5' exonuclease domain; it reads ACDTEVSRID…LYESMKKQLQ (199 aa). The polymerase stretch occupies residues 700–1030; that stretch reads HAIAALCEVC…SVDAKCAQNW (331 aa).

Belongs to the DNA polymerase type-A family. Expressed in shoot apical meristem.

It localises to the mitochondrion. Its subcellular location is the plastid. The protein localises to the chloroplast. It carries out the reaction DNA(n) + a 2'-deoxyribonucleoside 5'-triphosphate = DNA(n+1) + diphosphate. Its activity is regulated as follows. Not inhibited by aphidicolin. In terms of biological role, in addition to polymerase activity, this DNA polymerase exhibits 5'-3' exonuclease activity. Required for DNA replication and accumulation in plastids and mitochondria. This chain is DNA polymerase I B, chloroplastic/mitochondrial (POLIB), found in Arabidopsis thaliana (Mouse-ear cress).